Here is a 305-residue protein sequence, read N- to C-terminus: MSPTLPDVAVTEPSTLSAPLRWVGMQDIAIPVQLETGSSQLAARASVQVDLPRAELKGIHMSRLYRLLDTHLQQPLSPAMLSQLLQALIDSHADCASRAARLTLSFELMLRTPALRSEGLSGWRAYPVHIAAQCRAGRTTIQLQIEVLYASTCPCSAALSRQLLSDAFVQQHAGRDTLPLRDVVQWLQDHGTYATPHSQRSVAQVRVELPADAQRLAIQQLVGLCEQALATPVQAAVRRPDEQAFARLNGANLMCVEDAARRLRKPLAEHYAAFHVAVRHLESLHAHDAVAETGSDDAVLGPTTM.

It belongs to the GTP cyclohydrolase IV family.

It catalyses the reaction GTP + H2O = 7,8-dihydroneopterin 3'-triphosphate + formate + H(+). The protein operates within cofactor biosynthesis; 7,8-dihydroneopterin triphosphate biosynthesis; 7,8-dihydroneopterin triphosphate from GTP: step 1/1. Its function is as follows. Converts GTP to 7,8-dihydroneopterin triphosphate. The chain is GTP cyclohydrolase FolE2 from Xanthomonas axonopodis pv. citri (strain 306).